A 445-amino-acid polypeptide reads, in one-letter code: Reticulon-4 receptor-like 1 (445 aa).

The N-terminal stretch at Met1–Gly24 is a signal peptide. An LRRNT domain is found at Cys25–Glu54. LRR repeat units lie at residues Asp55 to Pro76, Ala77 to Gly98, His101 to Gly123, Lys126 to Gly147, Ser150 to Asp171, Asn174 to Gly195, Asn198 to Asp219, and Arg222 to Pro243. One can recognise an LRRCT domain in the interval Asn255–Gly306. 2 disordered regions span residues Cys304–Glu380 and Arg401–Gln421. Basic residues-rich tracts occupy residues Gly352 to Arg366 and Arg401 to Pro413. Ser424 carries GPI-anchor amidated serine lipidation. A helical membrane pass occupies residues Ser424–Leu444. Positions Ser425–Arg445 are cleaved as a propeptide — removed in mature form.

The protein belongs to the Nogo receptor family. Identified in a complex that contains RTN4R, RTN4RL1 and NGFR; the interaction depends on the presence of chondroitin sulfate proteoglycans. Does not interact with MAG, OMG and RTN4. Detected in brain (at protein level). Expressed in various regions of the brain, including the cerebral cortex, hippocampus, striatum, thalamus and cerebellum.

The protein resides in the cell membrane. It localises to the membrane raft. It is found in the perikaryon. The protein localises to the cell projection. In terms of biological role, cell surface receptor. Plays a functionally redundant role in postnatal brain development and in regulating axon regeneration in the adult central nervous system. Contributes to normal axon migration across the brain midline and normal formation of the corpus callosum. Protects motoneurons against apoptosis; protection against apoptosis is probably mediated by MAG. Plays a role in inhibiting neurite outgrowth and axon regeneration via its binding to neuronal chondroitin sulfate proteoglycans. Binds heparin. Like other family members, plays a role in restricting the number dendritic spines and the number of synapses that are formed during brain development. Signaling mediates activation of Rho and downstream reorganization of the actin cytoskeleton. The chain is Reticulon-4 receptor-like 1 from Rattus norvegicus (Rat).